The following is a 916-amino-acid chain: Chitin synthase B (916 aa).

Disordered regions lie at residues 1–75 (MAYH…GYSL) and 118–141 (ARSE…GGNG). Over residues 14–26 (HTYDDGHQLRDLS) the composition is skewed to basic and acidic residues. The segment covering 59–75 (RGLTASPVQRPTSGYSL) has biased composition (polar residues). Transmembrane regions (helical) follow at residues 544-561 (RWLN…MHFG), 588-608 (FLTW…MDLV), 629-649 (IINT…FILA), 664-684 (SFVA…YLVV), 716-736 (IIII…FMYL), 845-865 (LVTL…SEGL), and 884-904 (ALLW…TWFL).

Belongs to the chitin synthase family. Class III subfamily. As to quaternary structure, interacts with kibesin kinA. Post-translationally, activity requires trypsin activation, suggesting a zymogenic nature. In terms of processing, phosphorylated at yet unidentified residues in a N-terminal disordered region-dependent manner.

The protein localises to the cell membrane. The protein resides in the cell tip. Its subcellular location is the cell septum. It catalyses the reaction [(1-&gt;4)-N-acetyl-beta-D-glucosaminyl](n) + UDP-N-acetyl-alpha-D-glucosamine = [(1-&gt;4)-N-acetyl-beta-D-glucosaminyl](n+1) + UDP + H(+). Activity is stimulated by Mg(2+) and is inhibited by polyoxin D. Its function is as follows. Polymerizes chitin, a structural polymer of the cell wall and septum, by transferring the sugar moiety of UDP-GlcNAc to the non-reducing end of the growing chitin polymer. Does not substantially contribute to the rigidity of the cell wall but is necessary for normal hyphal growth and organization. In addition to its functions in the formation of normal cell walls of hyphae, is also involved in conidiophore and conidia development. This chain is Chitin synthase B, found in Emericella nidulans (strain FGSC A4 / ATCC 38163 / CBS 112.46 / NRRL 194 / M139) (Aspergillus nidulans).